A 239-amino-acid polypeptide reads, in one-letter code: Ribose-5-phosphate isomerase A (239 aa).

Residues 40-43 (SGST), 96-99 (DGAD), and 110-113 (KGGG) contribute to the substrate site. Glutamate 119 functions as the Proton acceptor in the catalytic mechanism. Lysine 137 contributes to the substrate binding site.

This sequence belongs to the ribose 5-phosphate isomerase family. In terms of assembly, homodimer.

The catalysed reaction is aldehydo-D-ribose 5-phosphate = D-ribulose 5-phosphate. It participates in carbohydrate degradation; pentose phosphate pathway; D-ribose 5-phosphate from D-ribulose 5-phosphate (non-oxidative stage): step 1/1. In terms of biological role, catalyzes the reversible conversion of ribose-5-phosphate to ribulose 5-phosphate. The sequence is that of Ribose-5-phosphate isomerase A from Methanococcus vannielii (strain ATCC 35089 / DSM 1224 / JCM 13029 / OCM 148 / SB).